A 127-amino-acid polypeptide reads, in one-letter code: MAKLSQDDLLAQFEEMTLIELSEFVKAFEEKFDVTAAAAVAVAGPAAPGAPVEAAAEQDEFDVILTGAGDKKIQVIKVVRELTSLGLKEAKDLVDGAPKPVLEKVAKDAAEKAAESLKGAGASVEVK.

Belongs to the bacterial ribosomal protein bL12 family. Homodimer. Part of the ribosomal stalk of the 50S ribosomal subunit. Forms a multimeric L10(L12)X complex, where L10 forms an elongated spine to which 2 to 4 L12 dimers bind in a sequential fashion. Binds GTP-bound translation factors.

Forms part of the ribosomal stalk which helps the ribosome interact with GTP-bound translation factors. Is thus essential for accurate translation. This is Large ribosomal subunit protein bL12 from Streptomyces coelicolor (strain ATCC BAA-471 / A3(2) / M145).